The following is a 263-amino-acid chain: Flagellar L-ring protein (263 aa).

The signal sequence occupies residues 1–15; the sequence is MKRLLCLLLLTTLTG. Cys-16 is lipidated: N-palmitoyl cysteine. The S-diacylglycerol cysteine moiety is linked to residue Cys-16. Positions 123 to 143 are disordered; the sequence is KSADAELSKSNDSSMDPLQVG.

Belongs to the FlgH family. As to quaternary structure, the basal body constitutes a major portion of the flagellar organelle and consists of four rings (L,P,S, and M) mounted on a central rod.

The protein localises to the cell outer membrane. The protein resides in the bacterial flagellum basal body. Functionally, assembles around the rod to form the L-ring and probably protects the motor/basal body from shearing forces during rotation. This is Flagellar L-ring protein from Aliivibrio fischeri (strain ATCC 700601 / ES114) (Vibrio fischeri).